The chain runs to 1304 residues: MAKIAKTHEDIEAQIREIQGKKAALDEAQGVGLDSTGYYDQEIYGGSDSRFAGYVTSIAATELEDDDDDYSSSTSLLGQKKPGYHAPVALLNDIPQSTEQYDPFAEHRPPKIADREDEYKKHRRTMIISPERLDPFADGGKTPDPKMNARTYMDVMREQHLTKEEREIRQQLAEKAKAGELKVVNGAAASQPPSKRKRRWDQTADQTPGATPKKLSSWDQAETPGHTPSLRWDETPGRAKGSETPGATPGSKIWDPTPSHTPAGAATPGRGDTPGHATPGHGGATSSARKNRWDETPKTERDTPGHGSGWAETPRTDRGGDSIGETPTPGASKRKSRWDETPASQMGGSTPVLTPGKTPIGTPAMNMATPTPGHIMSMTPEQLQAWRWEREIDERNRPLSDEELDAMFPEGYKVLPPPAGYVPIRTPARKLTATPTPLGGMTGFHMQTEDRTMKSVNDQPSGNLPFLKPDDIQYFDKLLVDVDESTLSPEEQKERKIMKLLLKIKNGTPPMRKAALRQITDKAREFGAGPLFNQILPLLMSPTLEDQERHLLVKVIDRILYKLDDLVRPYVHKILVVIEPLLIDEDYYARVEGREIISNLAKAAGLATMISTMRPDIDNMDEYVRNTTARAFAVVASALGIPSLLPFLKAVCKSKKSWQARHTGIKIVQQIAILMGCAILPHLRSLVEIIEHGLVDEQQKVRTISALAIAALAEAATPYGIESFDSVLKPLWKGIRQHRGKGLAAFLKAIGYLIPLMDAEYANYYTREVMLILIREFQSPDEEMKKIVLKVVKQCCGTDGVEANYIKTEILPPFFKHFWQHRMALDRRNYRQLVDTTVELANKVGAAEIISRIVDDLKDEAEQYRKMVMETIEKIMGNLGAADIDHKLEEQLIDGILYAFQEQTTEDSVMLNGFGTVVNALGKRVKPYLPQICGTVLWRLNNKSAKVRQQAADLISRTAVVMKTCQEEKLMGHLGVVLYEYLGEEYPEVLGSILGALKAIVNVIGMHKMTPPIKDLLPRLTPILKNRHEKVQENCIDLVGRIADRGAEYVSAREWMRICFELLELLKAHKKAIRRATVNTFGYIAKAIGPHDVLATLLNNLKVQERQNRVCTTVAIAIVAETCSPFTVLPALMNEYRVPELNVQNGVLKSLSFLFEYIGEMGKDYIYAVTPLLEDALMDRDLVHRQTASAVVQHMSLGVYGFGCEDSLNHLLNYVWPNVFETSPHVIQAVMGALEGLRVAIGPCRMLQYCLQGLFHPARKVRDVYWKIYNSIYIGSQDALIAHYPRIYNDDKNTYIRYELDYIL.

2 disordered regions span residues 100–119 (QYDP…EDEY) and 124–148 (RTMI…PKMN). Over residues 104-119 (FAEHRPPKIADREDEY) the composition is skewed to basic and acidic residues. Thr-125 is subject to Phosphothreonine. At Ser-129 the chain carries Phosphoserine. Lys-141 bears the N6-acetyllysine mark. Thr-142 carries the post-translational modification Phosphothreonine. Citrulline is present on Arg-157. The segment at 173-360 (AEKAKAGELK…PVLTPGKTPI (188 aa)) is disordered. The segment at 190–342 (SQPPSKRKRR…KRKSRWDETP (153 aa)) is U2AF homology region; mediates interaction with RBM39. Ser-194 is subject to Phosphoserine. Phosphothreonine occurs at positions 203, 207, and 211. Lys-214 is modified (N6-acetyllysine; alternate). Lys-214 is covalently cross-linked (Glycyl lysine isopeptide (Lys-Gly) (interchain with G-Cter in SUMO2); alternate). 2 positions are modified to phosphothreonine: Thr-223 and Thr-227. The segment at 223–491 (TPGHTPSLRW…VDESTLSPEE (269 aa)) is interaction with PPP1R8. Position 229 is a phosphoserine (Ser-229). The segment covering 231–241 (RWDETPGRAKG) has biased composition (basic and acidic residues). Phosphothreonine is present on residues Thr-235, Thr-244, Thr-248, Thr-257, Thr-261, Thr-267, Thr-273, and Thr-278. Ser-287 bears the Phosphoserine mark. The span at 291 to 304 (NRWDETPKTERDTP) shows a compositional bias: basic and acidic residues. A phosphothreonine mark is found at Thr-296, Thr-299, Thr-303, and Thr-313. Ser-322 is subject to Phosphoserine. Phosphothreonine occurs at positions 326 and 328. The residue at position 332 (Ser-332) is a Phosphoserine. At Thr-341 the chain carries Phosphothreonine. Residues 342 to 352 (PASQMGGSTPV) are compositionally biased toward polar residues. Ser-344 and Ser-349 each carry phosphoserine. 2 positions are modified to phosphothreonine: Thr-350 and Thr-354. Ser-400 bears the Phosphoserine mark. Lys-413 is covalently cross-linked (Glycyl lysine isopeptide (Lys-Gly) (interchain with G-Cter in SUMO2); alternate). A Glycyl lysine isopeptide (Lys-Gly) (interchain with G-Cter in SUMO1); alternate cross-link involves residue Lys-413. At Thr-426 the chain carries Phosphothreonine. A Glycyl lysine isopeptide (Lys-Gly) (interchain with G-Cter in SUMO2) cross-link involves residue Lys-430. Thr-434 carries the post-translational modification Phosphothreonine; by DYRK1A. Position 436 is a phosphothreonine (Thr-436). At Ser-488 the chain carries Phosphoserine. 11 HEAT repeats span residues 529 to 568 (GPLF…DLVR), 569 to 603 (PYVH…LAKA), 604 to 641 (AGLA…ALGI), 643 to 677 (SLLP…LMGC), 680 to 718 (LPHL…AATP), 763 to 801 (NYYT…TDGV), 843 to 881 (KVGA…NLGA), 1010 to 1048 (TPPI…RGAE), 1052 to 1090 (AREW…AIGP), 1122 to 1160 (TCSP…YIGE), and 1163 to 1201 (KDYI…GVYG). Positions 529–568 (GPLFNQILPLLMSPTLEDQERHLLVKVIDRILYKLDDLVR) are interaction with SF3B14. Residues 547-550 (QERH) are interaction with PHF5A. 2 positions are modified to N6-acetyllysine: Lys-554 and Lys-562. The segment at 1156–1157 (EY) is interaction with PHF5A. The tract at residues 1248–1304 (QYCLQGLFHPARKVRDVYWKIYNSIYIGSQDALIAHYPRIYNDDKNTYIRYELDYIL) is interaction with SF3B3 and SF3B5.

This sequence belongs to the SF3B1 family. Component of the 17S U2 SnRNP complex, a ribonucleoprotein complex that contains small nuclear RNA (snRNA) U2 and a number of specific proteins. Part of the SF3B subcomplex of the 17S U2 SnRNP complex. SF3B associates with the splicing subcomplex SF3A and a 12S RNA unit to form the U2 small nuclear ribonucleoproteins complex (U2 snRNP). Within the SF3B complex, interacts directly (via HEAT domain) with SF3B3, SF3B5, SF3B6 and (via HEAT domain) with PHF5A. The SF3B subcomplex interacts with U2AF2. Identified in the spliceosome C complex. Component of the minor (U12-type spliceosome) spliceosome. Within the minor spliceosome complex, interacts with SCNM1 and CRIPT. Component of the B-WICH complex, at least composed of SMARCA5/SNF2H, BAZ1B/WSTF, SF3B1, DEK, MYO1C, ERCC6, MYBBP1A and DDX21. Phosphorylated form interacts with PPP1R8. Interacts with PQBP1. Interacts with RBM17. Interacts with RBM39. Interacts with SETX. Interacts with RBM15. Interacts with USH1G. Interacts with SDE2. Interacts with U2AF1. Interacts with CACTIN. Interacts with ZRSR1. Interacts with CYREN. Post-translationally, phosphorylated. Phosphorylation occurs concomitantly with the splicing catalytic steps. Phosphorylation on Thr-244, Thr-248 and Thr-313 by cyclin-dependent kinases promotes interaction with PPP1R8 during mitosis. Citrullinated by PADI4.

The protein resides in the nucleus. It localises to the nucleus speckle. Component of the 17S U2 SnRNP complex of the spliceosome, a large ribonucleoprotein complex that removes introns from transcribed pre-mRNAs. The 17S U2 SnRNP complex (1) directly participates in early spliceosome assembly and (2) mediates recognition of the intron branch site during pre-mRNA splicing by promoting the selection of the pre-mRNA branch-site adenosine, the nucleophile for the first step of splicing. Within the 17S U2 SnRNP complex, SF3B1 is part of the SF3B subcomplex, which is required for 'A' complex assembly formed by the stable binding of U2 snRNP to the branchpoint sequence in pre-mRNA. Sequence independent binding of SF3A and SF3B subcomplexes upstream of the branch site is essential, it may anchor U2 snRNP to the pre-mRNA. May also be involved in the assembly of the 'E' complex. Also acts as a component of the minor spliceosome, which is involved in the splicing of U12-type introns in pre-mRNAs. Together with other U2 snRNP complex components may also play a role in the selective processing of microRNAs (miRNAs) from the long primary miRNA transcript, pri-miR-17-92. The sequence is that of Splicing factor 3B subunit 1 from Homo sapiens (Human).